A 526-amino-acid chain; its full sequence is Putative NipSnap protein K02D10.1 (526 aa).

Belongs to the NipSnap family.

This is Putative NipSnap protein K02D10.1 from Caenorhabditis elegans.